Consider the following 494-residue polypeptide: uncharacterized protein (494 aa).

Positions 4-82 (FTITVKKTEG…NMIIEPLEGF (79 aa)) constitute a 2Fe-2S ferredoxin-type domain. [2Fe-2S] cluster-binding residues include C46, C51, C54, and C66. 2 consecutive 4Fe-4S ferredoxin-type domains span residues 127 to 157 (DLKD…NYPG) and 178 to 208 (EKEA…IVHN). [4Fe-4S] cluster contacts are provided by C137, C140, C143, C147, C189, C192, C195, and C199.

This sequence belongs to the succinate dehydrogenase/fumarate reductase iron-sulfur protein family.

This is an uncharacterized protein from Methanococcus maripaludis (strain DSM 14266 / JCM 13030 / NBRC 101832 / S2 / LL).